The primary structure comprises 687 residues: DNA-directed RNA polymerase subunit beta' (687 aa).

The Zn(2+) site is built by Cys76, Cys78, Cys94, and Cys97. Mg(2+) is bound by residues Asp496, Asp498, and Asp500.

This sequence belongs to the RNA polymerase beta' chain family. RpoC1 subfamily. In terms of assembly, in plastids the minimal PEP RNA polymerase catalytic core is composed of four subunits: alpha, beta, beta', and beta''. When a (nuclear-encoded) sigma factor is associated with the core the holoenzyme is formed, which can initiate transcription. Requires Mg(2+) as cofactor. It depends on Zn(2+) as a cofactor.

The protein resides in the plastid. The protein localises to the chloroplast. It catalyses the reaction RNA(n) + a ribonucleoside 5'-triphosphate = RNA(n+1) + diphosphate. Functionally, DNA-dependent RNA polymerase catalyzes the transcription of DNA into RNA using the four ribonucleoside triphosphates as substrates. This Ipomoea purpurea (Common morning glory) protein is DNA-directed RNA polymerase subunit beta'.